The following is a 246-amino-acid chain: E3 ubiquitin-protein ligase MARCHF2 (246 aa).

An RING-CH-type zinc finger spans residues 56–116 (DTPSDGPFCR…ELCHTEFAVE (61 aa)). The interval 56-116 (DTPSDGPFCR…ELCHTEFAVE (61 aa)) is required for inhibition of HIV-1 virus production and VSV G protein expression. The Zn(2+) site is built by cysteine 64, cysteine 67, cysteine 80, cysteine 82, histidine 90, cysteine 93, cysteine 106, and cysteine 109. The tract at residues 121–246 (PLTEWLKDPG…LKKVAEETPV (126 aa)) is required for interaction with IKBKG. Helical transmembrane passes span 138–158 (LCCD…SGWL) and 175–195 (AVGL…WTLV).

As to quaternary structure, interacts with STX6; the interaction promotes MARCHF2-mediated ubiquitination and degradation of CFTR. Interacts with MARCHF3. Interacts with GOPC/CAL; the interaction leads to CFTR ubiquitination and degradation. Interacts with CFTR; the interaction leads to CFTR ubiqtuitination and degradation. Interacts (via PDZ domain) with DLG1 (via PDZ domains); the interaction leads to DLG1 ubiqtuitination and degradation. Interacts with ERGIC3. Interacts with ADRB2. Interacts with IKBKG/NEMO; during the late stages of macrophage viral and bacterial infection; the interaction leads to ubiquitination and degradation of IKBKG/NEMO. As to expression, broadly expressed.

Its subcellular location is the endoplasmic reticulum membrane. It is found in the lysosome membrane. It localises to the endosome membrane. The protein resides in the golgi apparatus membrane. The protein localises to the cytoplasm. Its subcellular location is the cell membrane. The enzyme catalyses S-ubiquitinyl-[E2 ubiquitin-conjugating enzyme]-L-cysteine + [acceptor protein]-L-lysine = [E2 ubiquitin-conjugating enzyme]-L-cysteine + N(6)-ubiquitinyl-[acceptor protein]-L-lysine.. The protein operates within protein modification; protein ubiquitination. Its function is as follows. E3 ubiquitin-protein ligase that may mediate ubiquitination of TFRC and CD86, and promote their subsequent endocytosis and sorting to lysosomes via multivesicular bodies. E3 ubiquitin ligases accept ubiquitin from an E2 ubiquitin-conjugating enzyme in the form of a thioester and then directly transfer the ubiquitin to targeted substrates. Together with GOPC/CAL mediates the ubiquitination and lysosomal degradation of CFTR. Ubiquitinates and therefore mediates the degradation of DLG1. Regulates the intracellular trafficking and secretion of alpha1-antitrypsin/SERPINA1 and HP/haptoglobin via ubiquitination and degradation of the cargo receptor ERGIC3. Negatively regulates the antiviral and antibacterial immune response by repression of the NF-kB and type 1 IFN signaling pathways, via MARCHF2-mediated K48-linked polyubiquitination of IKBKG/NEMO, resulting in its proteasomal degradation. May be involved in endosomal trafficking through interaction with STX6. Functionally, (Microbial infection) Positively regulates the degradation of Vesicular stomatitis virus (VSV) G protein via the lysosomal degradation pathway. Represses HIV-1 viral production and may inhibit the translocation of HIV-1 env to the cell surface, resulting in decreased viral cell-cell transmission. This chain is E3 ubiquitin-protein ligase MARCHF2, found in Homo sapiens (Human).